The chain runs to 476 residues: MAMKTSNNRFQDRVTKELENQFMRSAVSRAQDRFQTRRLQQTQELGDWEEWRSHGEEIRKHVLENLDYYLYQLSDNVAKRGGHVFFAQTAQEATAYIQDIAKKKNAAKIVKSKSMVTEEINLNAALEELGCEVIETDLGEYILQVADHEPPSHIVAPALHKNKEQIRDVFKAKQGYTQSEKPEELALYVREKLRDEYLTADIGITGCNFAIAESGSITLVTNEGNADLVTALPKTQVTVMGMERIVPTFEEMEVLVSLLTRSAVGQKLTSYITTLTGIKDEGDTDGPEEFHLVIVDNGRSAILGGEFQPILQCIRCAACVNACPVYRHVGGHTYGSIYSGPLGVVLSPLLGGYDDFKELPYASTLCGACTDACPVKIPLHQLIHRHRQVIVENEGKAPVSEKLLMKAFGLGASSPTLYKMATKMAAPAMAPFTNDHTITKGPGPLKAWTEARDFPAPNKNSFRNWMKHRTKGDEES.

4Fe-4S ferredoxin-type domains lie at 304 to 334 and 353 to 382; these read GGEFQPILQCIRCAACVNACPVYRHVGGHTY and YDDFKELPYASTLCGACTDACPVKIPLHQL. [4Fe-4S] cluster-binding residues include C313, C316, C319, C323, C366, C369, and C373. Residues 452–476 form a disordered region; that stretch reads RDFPAPNKNSFRNWMKHRTKGDEES.

Belongs to the LutB/YkgF family.

In terms of biological role, is involved in L-lactate degradation and allows cells to grow with lactate as the sole carbon source. Has probably a role as an electron transporter during oxidation of L-lactate. The protein is Lactate utilization protein B of Lysinibacillus sphaericus (strain C3-41).